Here is a 205-residue protein sequence, read N- to C-terminus: MNRLLLLLALVLSGVAAESIRETETMDPTSMLEYESSGSFTDEVFVDEDDDDDYEDGVDYEIDSESDNDEDYSGSGDDDFDDEDNVEDEDEEETTTLGNQIPEHDFDETKTGRKFDTFNENNEIDNDIRHPAKPKTLEPSNEIPMASIGSSGFFQRTEVIVAIIAGTLVGLVVAVSFIVFLVIRRNQNGDLVKKPIYKKTSTMEV.

An N-terminal signal peptide occupies residues 1–17 (MNRLLLLLALVLSGVAA). Residues 18 to 162 (ESIRETETMD…FFQRTEVIVA (145 aa)) are Extracellular-facing. A disordered region spans residues 26–113 (MDPTSMLEYE…HDFDETKTGR (88 aa)). O-linked (Xyl...) (glycosaminoglycan) serine glycosylation is found at Ser-37, Ser-73, and Ser-75. Residues 44–94 (VFVDEDDDDDYEDGVDYEIDSESDNDEDYSGSGDDDFDDEDNVEDEDEEET) show a composition bias toward acidic residues. Residues 102–113 (PEHDFDETKTGR) are compositionally biased toward basic and acidic residues. A helical transmembrane segment spans residues 163–183 (IIAGTLVGLVVAVSFIVFLVI). Over 184–205 (RRNQNGDLVKKPIYKKTSTMEV) the chain is Cytoplasmic.

Belongs to the syndecan proteoglycan family. In terms of assembly, interacts with the Wnt receptor fzd7 and its signal transducer dvl2/dsh. In terms of processing, O-glycosylated; contains both chondroitin sulfate and heparan sulfate. Ser-37, Ser-73 and Ser-75 can all be modified by either chondroitin sulfate or heparan sulfate, and the protein exists in forms that contain only chondroitin sulfate, only heparan sulfate and both chondroitin sulfate and heparan sulfate. In terms of tissue distribution, expressed in the animal hemisphere from the 4-cell to the blastula stage. During gastrulation, expressed in the involuting dorsal mesoderm and ectoderm. After involution, localized mainly to the anterior neuroectoderm. At later stages, expressed in the brain, branchial arches, pronephros, tailbud, and at low levels in the somites.

It is found in the membrane. Its function is as follows. Cell surface proteoglycan. Regulates non-canonical Wnt signaling, being necessary and sufficient for fibronectrin-mediated translocation of dvl2/dsh to the plasma membrane. Required for proper convergent extension movements during gastrulation, which shape the neural plate, and for subsequent neural tube closure. This chain is Syndecan 4-B (sdc4-b), found in Xenopus laevis (African clawed frog).